Reading from the N-terminus, the 30-residue chain is Cliotide T20 (30 aa).

Residues 1–30 (GSAIRCGESCLLGKCYTPGCTCDRPICKKN) constitute a cross-link (cyclopeptide (Gly-Asn)). Cystine bridges form between cysteine 6–cysteine 20, cysteine 10–cysteine 22, and cysteine 15–cysteine 27.

In terms of processing, contains 3 disulfide bonds. Post-translationally, this is a cyclic peptide. In terms of tissue distribution, expressed in root nodules but not in seed.

In terms of biological role, probably participates in a plant defense mechanism. Active against Gram-negative bacterium E.coli ATCC 700926 (MIC=0.5 uM) under low-salt conditions. Not active against Gram-positive bacterium S.aureus ATCC 12600 up to a concentration of 100 uM under low-salt conditions. Exhibits immunomodulatory activity but no cytotoxicity in vitro. This Clitoria ternatea (Butterfly pea) protein is Cliotide T20.